A 399-amino-acid chain; its full sequence is Dual-specificity RNA methyltransferase RlmN (399 aa).

The active-site Proton acceptor is the glutamate 122. A Radical SAM core domain is found at 128 to 371; it reads ETDRGTLCVS…VRTPRGRDIL (244 aa). Cysteines 135 and 374 form a disulfide. Positions 142, 146, and 149 each coordinate [4Fe-4S] cluster. S-adenosyl-L-methionine is bound by residues 200–201, serine 232, 254–256, and asparagine 331; these read GE and SLH. Cysteine 374 acts as the S-methylcysteine intermediate in catalysis.

This sequence belongs to the radical SAM superfamily. RlmN family. It depends on [4Fe-4S] cluster as a cofactor.

It is found in the cytoplasm. The catalysed reaction is adenosine(2503) in 23S rRNA + 2 reduced [2Fe-2S]-[ferredoxin] + 2 S-adenosyl-L-methionine = 2-methyladenosine(2503) in 23S rRNA + 5'-deoxyadenosine + L-methionine + 2 oxidized [2Fe-2S]-[ferredoxin] + S-adenosyl-L-homocysteine. The enzyme catalyses adenosine(37) in tRNA + 2 reduced [2Fe-2S]-[ferredoxin] + 2 S-adenosyl-L-methionine = 2-methyladenosine(37) in tRNA + 5'-deoxyadenosine + L-methionine + 2 oxidized [2Fe-2S]-[ferredoxin] + S-adenosyl-L-homocysteine. Specifically methylates position 2 of adenine 2503 in 23S rRNA and position 2 of adenine 37 in tRNAs. m2A2503 modification seems to play a crucial role in the proofreading step occurring at the peptidyl transferase center and thus would serve to optimize ribosomal fidelity. This chain is Dual-specificity RNA methyltransferase RlmN, found in Rhodopseudomonas palustris (strain ATCC BAA-98 / CGA009).